We begin with the raw amino-acid sequence, 338 residues long: LINE-1 retrotransposable element ORF1 protein (338 aa).

The tract at residues 1–40 is disordered; sequence MGKKQNRKTGNSKTQSASPPPKERSSSPATEQSWMENDFD. 2 stretches are compositionally biased toward polar residues: residues 8–17 and 26–35; these read KTGNSKTQSA and SSPATEQSWM. Residues 49–153 adopt a coiled-coil conformation; it reads RSNYSELRED…QSLQEIWDYV (105 aa). An RNA recognition motif (RRM) domain region spans residues 157–252; that stretch reads NLRLIGVPES…KGKPIRLTAD (96 aa). Positions 253–317 are C-terminal domain (CTD); it reads LSAETLQARR…TTRPALKELL (65 aa).

The protein belongs to the transposase 22 family. Homotrimer (via coiled coil domain). May also form larger homooligomers. May interact with DDX39A, HNRNPA1, SERBP1 and YBX1. Interacts with TEX19 and UBR2. Interacts with MOV10. Interacts with APOBEC3D; this interaction inhibits LINE-1 retrotransposition. Post-translationally, polyubiquitinated, probably by UBR2, which induces its degradation.

Its subcellular location is the nucleus. It is found in the nucleolus. The protein resides in the cytoplasm. The protein localises to the cytoplasmic ribonucleoprotein granule. It localises to the stress granule. Nucleic acid-binding protein which is essential for retrotransposition of LINE-1 elements in the genome. Functions as a nucleic acid chaperone binding its own transcript and therefore preferentially mobilizing the transcript from which they are encoded. This is LINE-1 retrotransposable element ORF1 protein (L1RE1) from Homo sapiens (Human).